Here is a 1406-residue protein sequence, read N- to C-terminus: Inactive tyrosine-protein kinase PRAG1 (1406 aa).

Phosphoserine is present on Ser148. Over residues 184–193 (EEKAVHKEKP) the composition is skewed to basic and acidic residues. 2 disordered regions span residues 184 to 205 (EEKAVHKEKPSFPYQDRPSTQE) and 217 to 248 (TTSGCHQGPGPLRESLPSEDDSDQRCSPSGDS). Tyr253, Tyr365, and Tyr413 each carry phosphotyrosine. 2 disordered regions span residues 372–470 (PAPE…TPQV) and 484–854 (DHRT…HSET). Residues 526–542 (RESHAHSASESKPKERP) are compositionally biased toward basic and acidic residues. Over residues 546–576 (PKLSKSSPVGSPVSPSAGGPPVSPLADLSDG) the composition is skewed to low complexity. Composition is skewed to polar residues over residues 660 to 671 (NGPTDHSNSTTW) and 678 to 695 (DGSSGQNSKVGTGMSKSA). Residues Ser696 and Ser745 each carry the phosphoserine modification. 2 stretches are compositionally biased toward polar residues: residues 737–746 (SQGSAESLSP) and 754–770 (SFTTGSTDSLASDSRTC). Residue Ser782 is modified to Phosphoserine. Over residues 798-808 (SGSTEDVSPSG) the composition is skewed to polar residues. Ser826 carries the phosphoserine modification. The interval 933–976 (STQLQLHGLLSNISSKEGTYAKLGGLYTQSLARLVAKCEDLFMG) is required for homodimerization. The region spanning 978–1329 (QKKELHFNEN…EAKRVLQCLL (352 aa)) is the Protein kinase domain. Residues 1163–1173 (GPAPAPAPAPA) are compositionally biased toward pro residues. The interval 1163-1206 (GPAPAPAPAPAPAAAAPPCSSAAPPAGGTLSPAAGPASPEGPRE) is disordered. Residues 1174–1202 (PAAAAPPCSSAAPPAGGTLSPAAGPASPE) show a composition bias toward low complexity. A required for homodimerization region spans residues 1331–1406 (GPRRELVQQP…LQSLKLLQLL (76 aa)).

The protein belongs to the protein kinase superfamily. In terms of assembly, homodimer. Dimerization leads to the catalytic activation of CSK. Interacts (via C-terminus) with RND2. Interacts with CSK (via SH2 domain) in a Tyr-413 phosphorylation-dependent manner; this interaction potentiates kinase activity of CSK. Interacts with PEAK1. Interacts with NOTCH1 intracellular domain (N1ICD). Forms a complex with N1ICD and MAML1, in a MAML1-dependent manner. In terms of processing, phosphorylated by CSK on Tyr-253, Tyr-365, and Tyr-413; Tyr-413 is a primary site of phosphorylation.

The protein resides in the cytoplasm. It is found in the cell junction. The protein localises to the focal adhesion. Its subcellular location is the nucleus. Catalytically inactive protein kinase that acts as a scaffold protein. Functions as an effector of the small GTPase RND2, which stimulates RhoA activity and inhibits NGF-induced neurite outgrowth. Promotes Src family kinase (SFK) signaling by regulating the subcellular localization of CSK, a negative regulator of these kinases, leading to the regulation of cell morphology and motility by a CSK-dependent mechanism. Acts as a critical coactivator of Notch signaling. In Homo sapiens (Human), this protein is Inactive tyrosine-protein kinase PRAG1.